The following is a 503-amino-acid chain: MTDKKYIIALDQGTTSSRAVLLDHNANVVEIAQREFTQIYPRAGWVEHNPMEIWATQSSTLNEVVAKSGITSDEIAAIGITNQRETTIVWEKSTGTPVYNAIVWQCRRTADITDKLKADGYEEYIRNTTGLVVDPYFSGTKVKWILDNVEGAREKAERGELLFGTVDTWLVWKLTQGRVHVTDYTNASRTMLFNIHTKQWDDKMLEILNIPRSILPEVRNSSEIYGQTNIGGKGGVRIPVAGIAGDQQAALYGHLCVHAGQAKNTYGTGCFMLLHTGNKAITSKNGLLTTIACNAKGEPEYALEGSVFIAGASIQWLRDELKIVHDSFDSEYFAQKVTDSNGVYVVPAFTGLGAPYWDPYARGAIFGLSRGANCNHIVRATLQSIAYQTRDVLEAMQSDSGERLQYLRVDGGATNNNFLMQFQADILDVNVERPVVKEVTALGAAYLAGLATGFWKDLDELRDKARVERTFSPDSDNEKRERRYKGWKKAVKRSLEWAKEDEE.

Thr14 provides a ligand contact to ADP. Residues Thr14, Thr15, and Ser16 each contribute to the ATP site. Thr14 contacts sn-glycerol 3-phosphate. Arg18 lines the ADP pocket. The sn-glycerol 3-phosphate site is built by Arg84, Glu85, Tyr136, and Asp246. Positions 84, 85, 136, 246, and 247 each coordinate glycerol. ADP-binding residues include Thr268 and Gly311. Positions 268, 311, 315, and 412 each coordinate ATP. Residues Gly412 and Asn416 each contribute to the ADP site.

It belongs to the FGGY kinase family.

It catalyses the reaction glycerol + ATP = sn-glycerol 3-phosphate + ADP + H(+). The protein operates within polyol metabolism; glycerol degradation via glycerol kinase pathway; sn-glycerol 3-phosphate from glycerol: step 1/1. Its activity is regulated as follows. Inhibited by fructose 1,6-bisphosphate (FBP). Its function is as follows. Key enzyme in the regulation of glycerol uptake and metabolism. Catalyzes the phosphorylation of glycerol to yield sn-glycerol 3-phosphate. The sequence is that of Glycerol kinase from Haemophilus influenzae (strain PittGG).